The primary structure comprises 127 residues: Large ribosomal subunit protein bL12 (127 aa).

Belongs to the bacterial ribosomal protein bL12 family. In terms of assembly, homodimer. Part of the ribosomal stalk of the 50S ribosomal subunit. Forms a multimeric L10(L12)X complex, where L10 forms an elongated spine to which 2 to 4 L12 dimers bind in a sequential fashion. Binds GTP-bound translation factors.

Forms part of the ribosomal stalk which helps the ribosome interact with GTP-bound translation factors. Is thus essential for accurate translation. The sequence is that of Large ribosomal subunit protein bL12 from Phytoplasma mali (strain AT).